Reading from the N-terminus, the 353-residue chain is MTATLERRESASIWGRFCNWVTSTENRLYIGWFGVLMIPTLLTATSVFIIAFIAAPPVDIDGIREPVSGSLLYGNNIISGAIIPTSAAIGLHFYPIWEAASVDEWLYNGGPYEIIVLHFLLGVACYMGREWELSYRLGMRPWIAVAYSAPVAAATAVFLIYPIGQGSFSDGMPLGISGTFNFMIVFQAEHNILMHPFHMLGVAGVFGGSLFSAMHGSLVTSSLIRETTENESANAGYKFGQEEETYNIVAAHGYFGRLIFQYASFNNSRSLHFFLAAWPVVGIWFTALGISTMAFNLNGFNFNQSVVDSQGRVINTWADIINRANLGMEVMHERNAHNFPLDLAAVEAPAVNG.

Residue Thr2 is modified to N-acetylthreonine. Thr2 carries the phosphothreonine modification. Helical transmembrane passes span 29–46, 118–133, and 142–156; these read YIGW…TATS, HFLL…EWEL, and WIAV…AATA. His118 serves as a coordination point for chlorophyll a. Residue Tyr126 participates in pheophytin a binding. [CaMn4O5] cluster contacts are provided by Asp170 and Glu189. Residues 197–218 traverse the membrane as a helical segment; that stretch reads FHMLGVAGVFGGSLFSAMHGSL. His198 serves as a coordination point for chlorophyll a. Residues His215 and 264 to 265 contribute to the a quinone site; that span reads SF. A Fe cation-binding site is contributed by His215. Position 272 (His272) interacts with Fe cation. A helical transmembrane segment spans residues 274–288; it reads FLAAWPVVGIWFTAL. Residues His332, Glu333, Asp342, and Ala344 each coordinate [CaMn4O5] cluster. The propeptide occupies 345–353; the sequence is AVEAPAVNG.

The protein belongs to the reaction center PufL/M/PsbA/D family. As to quaternary structure, PSII is composed of 1 copy each of membrane proteins PsbA, PsbB, PsbC, PsbD, PsbE, PsbF, PsbH, PsbI, PsbJ, PsbK, PsbL, PsbM, PsbT, PsbX, PsbY, PsbZ, Psb30/Ycf12, at least 3 peripheral proteins of the oxygen-evolving complex and a large number of cofactors. It forms dimeric complexes. The cofactor is The D1/D2 heterodimer binds P680, chlorophylls that are the primary electron donor of PSII, and subsequent electron acceptors. It shares a non-heme iron and each subunit binds pheophytin, quinone, additional chlorophylls, carotenoids and lipids. D1 provides most of the ligands for the Mn4-Ca-O5 cluster of the oxygen-evolving complex (OEC). There is also a Cl(-1) ion associated with D1 and D2, which is required for oxygen evolution. The PSII complex binds additional chlorophylls, carotenoids and specific lipids.. Post-translationally, tyr-161 forms a radical intermediate that is referred to as redox-active TyrZ, YZ or Y-Z. C-terminally processed by CTPA; processing is essential to allow assembly of the oxygen-evolving complex and thus photosynthetic growth.

It is found in the plastid. The protein localises to the chloroplast thylakoid membrane. The catalysed reaction is 2 a plastoquinone + 4 hnu + 2 H2O = 2 a plastoquinol + O2. Functionally, photosystem II (PSII) is a light-driven water:plastoquinone oxidoreductase that uses light energy to abstract electrons from H(2)O, generating O(2) and a proton gradient subsequently used for ATP formation. It consists of a core antenna complex that captures photons, and an electron transfer chain that converts photonic excitation into a charge separation. The D1/D2 (PsbA/PsbD) reaction center heterodimer binds P680, the primary electron donor of PSII as well as several subsequent electron acceptors. The chain is Photosystem II protein D1 from Conocephalum conicum (Snakeskin liverwort).